The primary structure comprises 109 residues: Nucleoid-associated protein HD_0326 (109 aa).

It belongs to the YbaB/EbfC family. Homodimer.

It is found in the cytoplasm. The protein resides in the nucleoid. In terms of biological role, binds to DNA and alters its conformation. May be involved in regulation of gene expression, nucleoid organization and DNA protection. This Haemophilus ducreyi (strain 35000HP / ATCC 700724) protein is Nucleoid-associated protein HD_0326.